The following is a 279-amino-acid chain: Oxygen-dependent coproporphyrinogen-III oxidase (279 aa).

Position 102 (S102) interacts with substrate. 2 residues coordinate a divalent metal cation: H106 and H116. Catalysis depends on H116, which acts as the Proton donor. 118–120 (NTR) provides a ligand contact to substrate. The a divalent metal cation site is built by H149 and H179. Positions 244–279 (YVEFNLLYDRGTKFGLMTDGNVEAILMSLPPEVKFN) are important for dimerization.

This sequence belongs to the aerobic coproporphyrinogen-III oxidase family. Homodimer. A divalent metal cation serves as cofactor.

It localises to the cytoplasm. It catalyses the reaction coproporphyrinogen III + O2 + 2 H(+) = protoporphyrinogen IX + 2 CO2 + 2 H2O. The protein operates within porphyrin-containing compound metabolism; protoporphyrin-IX biosynthesis; protoporphyrinogen-IX from coproporphyrinogen-III (O2 route): step 1/1. Functionally, involved in the heme biosynthesis. Catalyzes the aerobic oxidative decarboxylation of propionate groups of rings A and B of coproporphyrinogen-III to yield the vinyl groups in protoporphyrinogen-IX. The protein is Oxygen-dependent coproporphyrinogen-III oxidase of Rickettsia conorii (strain ATCC VR-613 / Malish 7).